The sequence spans 169 residues: UPF0303 protein BMEI0598 (169 aa).

Belongs to the UPF0303 family.

This is UPF0303 protein BMEI0598 from Brucella melitensis biotype 1 (strain ATCC 23456 / CCUG 17765 / NCTC 10094 / 16M).